Consider the following 477-residue polypeptide: Ribulose bisphosphate carboxylase large chain (477 aa).

The propeptide occupies 1–2 (MS). Proline 3 is modified (N-acetylproline). 2 residues coordinate substrate: asparagine 123 and threonine 173. Lysine 175 (proton acceptor) is an active-site residue. Lysine 177 is a substrate binding site. Lysine 201, aspartate 203, and glutamate 204 together coordinate Mg(2+). Lysine 201 is subject to N6-carboxylysine. Histidine 294 functions as the Proton acceptor in the catalytic mechanism. Substrate-binding residues include arginine 295, histidine 327, and serine 379.

It belongs to the RuBisCO large chain family. Type I subfamily. In terms of assembly, heterohexadecamer of 8 large chains and 8 small chains; disulfide-linked. The disulfide link is formed within the large subunit homodimers. Requires Mg(2+) as cofactor. Post-translationally, the disulfide bond which can form between Cys-247 in the large chain dimeric partners within the hexadecamer appears to be associated with oxidative stress and protein turnover.

It is found in the plastid. The protein localises to the chloroplast. It carries out the reaction 2 (2R)-3-phosphoglycerate + 2 H(+) = D-ribulose 1,5-bisphosphate + CO2 + H2O. The enzyme catalyses D-ribulose 1,5-bisphosphate + O2 = 2-phosphoglycolate + (2R)-3-phosphoglycerate + 2 H(+). Functionally, ruBisCO catalyzes two reactions: the carboxylation of D-ribulose 1,5-bisphosphate, the primary event in carbon dioxide fixation, as well as the oxidative fragmentation of the pentose substrate in the photorespiration process. Both reactions occur simultaneously and in competition at the same active site. The polypeptide is Ribulose bisphosphate carboxylase large chain (rbcL) (Triticum aestivum (Wheat)).